A 325-amino-acid chain; its full sequence is Elongation factor P--(R)-beta-lysine ligase (325 aa).

Serine 76–glutamate 78 is a binding site for substrate. Residues arginine 100 to glutamate 102 and asparagine 109 each bind ATP. Tyrosine 118 contacts substrate. Glutamate 244–leucine 245 provides a ligand contact to ATP. Glutamate 251 is a substrate binding site. Glycine 300 contacts ATP.

Belongs to the class-II aminoacyl-tRNA synthetase family. EpmA subfamily. As to quaternary structure, homodimer.

The enzyme catalyses D-beta-lysine + L-lysyl-[protein] + ATP = N(6)-((3R)-3,6-diaminohexanoyl)-L-lysyl-[protein] + AMP + diphosphate + H(+). With EpmB is involved in the beta-lysylation step of the post-translational modification of translation elongation factor P (EF-P) on 'Lys-34'. Catalyzes the ATP-dependent activation of (R)-beta-lysine produced by EpmB, forming a lysyl-adenylate, from which the beta-lysyl moiety is then transferred to the epsilon-amino group of EF-P 'Lys-34'. The protein is Elongation factor P--(R)-beta-lysine ligase of Salmonella paratyphi A (strain ATCC 9150 / SARB42).